We begin with the raw amino-acid sequence, 123 residues long: Glycine cleavage system H protein (123 aa).

One can recognise a Lipoyl-binding domain in the interval 23 to 104 (HWLAGITDHA…PYDAWIFSFE (82 aa)). Residue Lys-64 is modified to N6-lipoyllysine.

This sequence belongs to the GcvH family. The glycine cleavage system is composed of four proteins: P, T, L and H. The cofactor is (R)-lipoate.

In terms of biological role, the glycine cleavage system catalyzes the degradation of glycine. The H protein shuttles the methylamine group of glycine from the P protein to the T protein. This chain is Glycine cleavage system H protein, found in Methylobacillus flagellatus (strain ATCC 51484 / DSM 6875 / VKM B-1610 / KT).